A 360-amino-acid polypeptide reads, in one-letter code: Peptide chain release factor 1 (360 aa).

An N5-methylglutamine modification is found at Gln235. Over residues 281–307 (ERQRADSERSADRRSQVGSGDRSERIR) the composition is skewed to basic and acidic residues. Residues 281 to 311 (ERQRADSERSADRRSQVGSGDRSERIRTYNF) are disordered.

Belongs to the prokaryotic/mitochondrial release factor family. Post-translationally, methylated by PrmC. Methylation increases the termination efficiency of RF1.

Its subcellular location is the cytoplasm. Functionally, peptide chain release factor 1 directs the termination of translation in response to the peptide chain termination codons UAG and UAA. The protein is Peptide chain release factor 1 of Rhizobium meliloti (strain 1021) (Ensifer meliloti).